Here is an 881-residue protein sequence, read N- to C-terminus: NACHT, LRR and PYD domains-containing protein 6 (881 aa).

The 129-residue stretch at 1–129 (MDAAGASCSS…EHVLRQHAKV (129 aa)) folds into the Pyrin domain. Residue S104 is modified to Phosphoserine. Residues 154–175 (AGEDELLGTSGEPEPERARRSD) are disordered. The NACHT domain maps to 194–510 (LTVVLQGPAG…EFLAALSYLL (317 aa)). 200 to 207 (GPAGIGKT) serves as a coordination point for ATP. One copy of the LRR 1 repeat lies at 459–484 (EKDLERLKLQGSQVQTMFLSKKELPG). Residues 579-611 (QSQPKVATVGAEKKDELKDEEAEEEEEEEEEEE) are disordered. The span at 596-611 (KDEEAEEEEEEEEEEE) shows a compositional bias: acidic residues. LRR repeat units follow at residues 637-660 (LSSLPEMVLERVRLTRMDLEVLSY), 749-772 (APSLRELGLLQNRLTEAGLRLLSQ), and 839-863 (TLSLTSVELTENPLRELQAVKTLKP).

This sequence belongs to the NLRP family. In terms of assembly, homomultimer; forms the NLRP6 inflammasome polymeric complex, a filament composed of homopolymers in response to pathogens and other damage-associated signals. The core of NLRP6 inflammasomes consists of a signal sensor component (NLRP6), an adapter (PYCARD/ASC), which recruits effector pro-inflammatory caspases (CASP1 and CASP4). Interacts (via pyrin domain) with PYCARD/ASC (via pyrin domain); interaction takes place following NLRP6 activation and formation of liquid-liquid phase separation (LLPS), initiating nucleation which greatly enhances further addition of soluble PYCARD/ASC molecules to the speck in a prion-like polymerization process. Clustered PYCARD/ASC nucleates the formation of CASP1 (or possibly CASP4) filaments through the interaction of their respective CARD domains, acting as a platform for CASP1 polymerization. CASP1 filament formation increases local enzyme concentration, resulting in trans-autocleavage and activation. Active CASP1 then processes IL1B and IL18 precursors, leading to the release of mature cytokines in the extracellular milieu and inflammatory response. Interacts with DHX15. In terms of processing, polyubiquitinated with 'Lys-63'-linked chains, promoting the interaction with PYCARD/ASC and formation of the NLRP6 inflammasome. Deubiquitination by CYLD decreases the interaction with PYCARD/ASC. In terms of tissue distribution, detected in several tissues. Expressed in renal epithelial cells in medullary thick ascending limb of Henle, as well as in salivary gland apical epithelium (at protein level). Isoform 1 is widely expressed. Isoform 2 is primarily expressed in kidney (at protein level).

It localises to the cytoplasm. Its subcellular location is the inflammasome. It is found in the cell membrane. The protein localises to the nucleus membrane. Acts as the sensor component of the NLRP6 inflammasome, which mediates inflammasome activation in response to various pathogen-associated signals, leading to maturation and secretion of IL1B and IL18. Inflammasomes are supramolecular complexes that assemble in the cytosol in response to pathogens and other damage-associated signals and play critical roles in innate immunity and inflammation. Acts as a recognition receptor (PRR): recognizes and binds specific pathogens and other damage-associated signals, such as lipoteichoic acid (LTA), a cell-wall component of Gram-positive bacteria, or double stranded RNA (dsRNA). May also recognize and bind lipopolysaccharide (LPS), a major component of the outer membrane of Gram-negative bacteria; however, LPS is probably not a major activator of the NLRP6 inflammasome. Following LTA- or dsRNA-binding, NLRP6 undergoes liquid-liquid phase separation (LLPS), enhancing multivalent interactions, an essential step for the formation of the NLRP6 inflammasome polymeric complex. The NLRP6 inflammasome acts by promoting recruitment of effector pro-inflammatory caspases (CASP1 and/or CASP4) that catalyze maturation and secretion of IL1B and IL18 in the extracellular milieu. The NLRP6 inflammasome plays a central role in the maintenance of epithelial integrity and host defense against microbial infections in the intestine. Required to restrict infection against Gram-positive bacteria by recognizing lipoteichoic acid (LTA), leading to recruitment of CASP4 and CASP1, and subsequent maturation and secretion of IL1B and IL18. Involved in intestinal antiviral innate immunity together with DHX15: recognizes and binds viral dsRNA to restrict infection by enteric viruses through the interferon pathway and GSDMD-dependent release of IL18. Required to prevent infection by the apicomplexan parasite Cryptosporidium in enterocytes by promoting GSDMD-dependent release of IL18. The NLRP6 inflammasome may also regulate the gut microbiota composition by acting as a sensor of microbiota-associated metabolites to form a PYCARD/ASC-dependent inflammasome for downstream IL18 release and secretion of antimicrobial peptides. Essential for gut mucosal self-renewal and proliferation. Regulate mucus secretion in an inflammasome- and autophagy-dependent manner to prevent invasion by enteric bacteria,. During systemic bacterial infections, the NLRP6 inflammasome negatively regulates neutrophil recruitment and neutrophil extracellular traps (NETs) formation. May promote peripheral nerve recovery following injury via an inflammasome-independent mechanism. The polypeptide is NACHT, LRR and PYD domains-containing protein 6 (Rattus norvegicus (Rat)).